A 226-amino-acid chain; its full sequence is UPF0758 protein Daro_3142 (226 aa).

The 124-residue stretch at 103-226 (SFTSPGKVRD…PLSFAERGLL (124 aa)) folds into the MPN domain. Zn(2+) is bound by residues His174, His176, and Asp187. The short motif at 174 to 187 (HNHPSGIAEPSRAD) is the JAMM motif element.

This sequence belongs to the UPF0758 family.

The sequence is that of UPF0758 protein Daro_3142 from Dechloromonas aromatica (strain RCB).